The sequence spans 931 residues: Protein translocase subunit SecA (931 aa).

ATP is bound by residues Gln87, 105 to 109, and Asp515; that span reads GEGKT. Residues Cys915, Cys917, Cys926, and His927 each coordinate Zn(2+).

It belongs to the SecA family. Monomer and homodimer. Part of the essential Sec protein translocation apparatus which comprises SecA, SecYEG and auxiliary proteins SecDF-YajC and YidC. Requires Zn(2+) as cofactor.

It is found in the cell inner membrane. The protein localises to the cytoplasm. It carries out the reaction ATP + H2O + cellular proteinSide 1 = ADP + phosphate + cellular proteinSide 2.. Functionally, part of the Sec protein translocase complex. Interacts with the SecYEG preprotein conducting channel. Has a central role in coupling the hydrolysis of ATP to the transfer of proteins into and across the cell membrane, serving both as a receptor for the preprotein-SecB complex and as an ATP-driven molecular motor driving the stepwise translocation of polypeptide chains across the membrane. The sequence is that of Protein translocase subunit SecA from Burkholderia ambifaria (strain MC40-6).